The following is a 356-amino-acid chain: Phospho-N-acetylmuramoyl-pentapeptide-transferase (356 aa).

10 helical membrane-spanning segments follow: residues 4-24 (ILLA…WFIH), 53-73 (GGAV…LVTW), 76-96 (PSIS…IGFL), 116-136 (LLGQ…FPDV), 152-172 (ISWL…LIAG), 186-206 (LATG…IWQF), 228-248 (DIAV…WWNA), 253-273 (IFLG…MAVV), 278-298 (LLLV…MLQV), and 333-353 (FWII…AEWV).

This sequence belongs to the glycosyltransferase 4 family. MraY subfamily. Requires Mg(2+) as cofactor.

The protein localises to the cell membrane. It catalyses the reaction UDP-N-acetyl-alpha-D-muramoyl-L-alanyl-gamma-D-glutamyl-meso-2,6-diaminopimeloyl-D-alanyl-D-alanine + di-trans,octa-cis-undecaprenyl phosphate = di-trans,octa-cis-undecaprenyl diphospho-N-acetyl-alpha-D-muramoyl-L-alanyl-D-glutamyl-meso-2,6-diaminopimeloyl-D-alanyl-D-alanine + UMP. Its pathway is cell wall biogenesis; peptidoglycan biosynthesis. Its function is as follows. Catalyzes the initial step of the lipid cycle reactions in the biosynthesis of the cell wall peptidoglycan: transfers peptidoglycan precursor phospho-MurNAc-pentapeptide from UDP-MurNAc-pentapeptide onto the lipid carrier undecaprenyl phosphate, yielding undecaprenyl-pyrophosphoryl-MurNAc-pentapeptide, known as lipid I. The sequence is that of Phospho-N-acetylmuramoyl-pentapeptide-transferase from Cutibacterium acnes (strain DSM 16379 / KPA171202) (Propionibacterium acnes).